The sequence spans 121 residues: Centrocin 2 (121 aa).

An N-terminal signal peptide occupies residues 1-20 (MMIKIAVVLCAVMATSMVFA). The propeptide occupies 21 to 50 (NDVKEQELADLLDLLISEEVSSPDDAVAES). Residues Trp-51 and Trp-59 each carry the 6'-bromotryptophan modification. Cys-77 and Cys-112 are joined by a disulfide. Positions 83 to 106 (SPQEARAKVLEAFPEMKESDLDEE) are excised as a propeptide. The residue at position 107 (Gln-107) is a Pyrrolidone carboxylic acid. A Histidine amide modification is found at His-119.

As to quaternary structure, heterodimer of a light and a heavy chain, probably disulfide-linked.

In terms of biological role, has antimicrobial activity against Gram-negative bacteria, Gram-positive bacteria and against fungi with minimum inhibitory concentration (MIC) between 0.78 uM and 50 uM. Shows little hemolytic activity at concentrations up to 12.5 uM but &gt;50% lysis at 100 uM. The chain is Centrocin 2 from Echinus esculentus (Sea urchin).